Here is a 284-residue protein sequence, read N- to C-terminus: 2-dehydro-3-deoxyphosphooctonate aldolase (284 aa).

The protein belongs to the KdsA family.

The protein localises to the cytoplasm. It catalyses the reaction D-arabinose 5-phosphate + phosphoenolpyruvate + H2O = 3-deoxy-alpha-D-manno-2-octulosonate-8-phosphate + phosphate. The protein operates within carbohydrate biosynthesis; 3-deoxy-D-manno-octulosonate biosynthesis; 3-deoxy-D-manno-octulosonate from D-ribulose 5-phosphate: step 2/3. Its pathway is bacterial outer membrane biogenesis; lipopolysaccharide biosynthesis. This Glaesserella parasuis serovar 5 (strain SH0165) (Haemophilus parasuis) protein is 2-dehydro-3-deoxyphosphooctonate aldolase.